A 500-amino-acid chain; its full sequence is Envelop protein OPG153 (500 aa).

Residues C43 and C342 are joined by a disulfide bond.

The protein belongs to the orthopoxvirus OPG153 protein family. As to quaternary structure, interacts with proteins OPG094 and OPG143. Interacts with OPG154. Interacts with OPG152. Interacts with host laminin.

It localises to the virion membrane. Envelop protein that mediates acid-dependent endocytosis into host cells. Plays an important role in endocytic entry of the virus by acting as an acid-sensitive membrane fusion suppressor. Low pH in host endosomes triggers conformational changes to allow de-repression of viral fusion complex activity and membrane fusion within vesicles. Also plays a role in bridging the mature virion with structural protein OPG152. This is Envelop protein OPG153 (OPG153) from Vaccinia virus (strain Western Reserve) (VACV).